We begin with the raw amino-acid sequence, 194 residues long: Mersacidin decarboxylase (194 aa).

The active site involves His75.

Belongs to the HFCD (homooligomeric flavin containing Cys decarboxylase) superfamily. Homododecamer. It depends on FAD as a cofactor.

It participates in antibiotic biosynthesis; mersacidin biosynthesis. Catalyzes the oxidative decarboxylation of the C-terminal cysteine residue of mersacidin to an aminoenethiol residue. This is Mersacidin decarboxylase (mrsD) from Bacillus sp. (strain HIL-Y85/54728).